We begin with the raw amino-acid sequence, 171 residues long: Ribosome maturation factor RimM (171 aa).

Residues 96-170 (AEGEYYYHEI…LVTIHVMEGL (75 aa)) enclose the PRC barrel domain.

The protein belongs to the RimM family. As to quaternary structure, binds ribosomal protein uS19.

The protein resides in the cytoplasm. In terms of biological role, an accessory protein needed during the final step in the assembly of 30S ribosomal subunit, possibly for assembly of the head region. Essential for efficient processing of 16S rRNA. May be needed both before and after RbfA during the maturation of 16S rRNA. It has affinity for free ribosomal 30S subunits but not for 70S ribosomes. In Bacillus mycoides (strain KBAB4) (Bacillus weihenstephanensis), this protein is Ribosome maturation factor RimM.